A 179-amino-acid polypeptide reads, in one-letter code: Adenylyl-sulfate kinase (179 aa).

ATP is bound at residue 13–20 (GLSGAGKS). The active-site Phosphoserine intermediate is the serine 87.

It belongs to the APS kinase family.

The catalysed reaction is adenosine 5'-phosphosulfate + ATP = 3'-phosphoadenylyl sulfate + ADP + H(+). It participates in sulfur metabolism; hydrogen sulfide biosynthesis; sulfite from sulfate: step 2/3. Functionally, catalyzes the synthesis of activated sulfate. The protein is Adenylyl-sulfate kinase of Paraburkholderia xenovorans (strain LB400).